The primary structure comprises 573 residues: Cytosolic 5'-nucleotidase 1B (573 aa).

The span at 1 to 11 (MSQTSLKHKKK) shows a compositional bias: basic residues. 2 disordered regions span residues 1–200 (MSQT…PPTE) and 218–238 (EPEYISDGPQQRQRQQTEEDE). Residues 12-35 (NEPGMRYSKESLDAEKRKDSDKTG) show a composition bias toward basic and acidic residues. Residues 60-73 (NQWSRTSRSPSTGA) show a composition bias toward polar residues. Residues 93–105 (SSTTSRTSSASPS) are compositionally biased toward low complexity. The span at 115 to 136 (TSEKSSIQQTPQNRPITQLESQ) shows a compositional bias: polar residues. 2 stretches are compositionally biased toward basic and acidic residues: residues 161–174 (WAHRENREPRDLQL) and 182–194 (DSREGMPKTREYP). Catalysis depends on Asp428, which acts as the Nucleophile.

This sequence belongs to the 5'-nucleotidase type 3 family. The cofactor is Mg(2+). Expressed at highest levels in testis. Also expressed in brain, skeletal muscle, kidney and heart.

The protein localises to the cytoplasm. It carries out the reaction a ribonucleoside 5'-phosphate + H2O = a ribonucleoside + phosphate. It catalyses the reaction AMP + H2O = adenosine + phosphate. Its activity is regulated as follows. Activated by ADP. In terms of biological role, catalyzes the hydrolysis of nucleotide monophosphates, releasing inorganic phosphate and the corresponding nucleoside, AMP is the major substrate. In Mus musculus (Mouse), this protein is Cytosolic 5'-nucleotidase 1B (Nt5c1b).